Reading from the N-terminus, the 499-residue chain is UDP-N-acetylmuramoylalanine--D-glutamate ligase (499 aa).

Gly128 to Thr134 contributes to the ATP binding site.

The protein belongs to the MurCDEF family.

The protein resides in the cytoplasm. It catalyses the reaction UDP-N-acetyl-alpha-D-muramoyl-L-alanine + D-glutamate + ATP = UDP-N-acetyl-alpha-D-muramoyl-L-alanyl-D-glutamate + ADP + phosphate + H(+). Its pathway is cell wall biogenesis; peptidoglycan biosynthesis. In terms of biological role, cell wall formation. Catalyzes the addition of glutamate to the nucleotide precursor UDP-N-acetylmuramoyl-L-alanine (UMA). This Rhodococcus jostii (strain RHA1) protein is UDP-N-acetylmuramoylalanine--D-glutamate ligase.